A 132-amino-acid chain; its full sequence is Small ribosomal subunit protein uS11 (132 aa).

Residues 1-16 are compositionally biased toward basic residues; it reads MAAGMKGKRSRRRKER. Positions 1–20 are disordered; it reads MAAGMKGKRSRRRKERKNVE.

The protein belongs to the universal ribosomal protein uS11 family. Part of the 30S ribosomal subunit. Interacts with proteins S7 and S18. Binds to IF-3.

In terms of biological role, located on the platform of the 30S subunit, it bridges several disparate RNA helices of the 16S rRNA. Forms part of the Shine-Dalgarno cleft in the 70S ribosome. The sequence is that of Small ribosomal subunit protein uS11 from Clostridium botulinum (strain Loch Maree / Type A3).